A 182-amino-acid polypeptide reads, in one-letter code: Thioredoxin F-type, chloroplastic (182 aa).

Residues 1-22 form a disordered region; that stretch reads MPLSLRLAPSPTALSPTTGGFS. One can recognise a Thioredoxin domain in the interval 52–177; that stretch reads KRGDSSVVRC…LVAAIETARS (126 aa). Active-site nucleophile residues include C102 and C105. A disulfide bridge links C102 with C105.

Belongs to the thioredoxin family. Plant F-type subfamily. In terms of assembly, forms a complex with heterodimeric ferredoxin-thioredoxin reductase (FTR) and ferredoxin.

The protein localises to the plastid. It localises to the chloroplast. Its function is as follows. Participates in various redox reactions through the reversible oxidation of the active center dithiol to a disulfide. The F form is known to activate a number of enzymes of the photosynthetic carbon cycle. The chain is Thioredoxin F-type, chloroplastic (TRXF) from Brassica napus (Rape).